Reading from the N-terminus, the 182-residue chain is Flavodoxin (182 aa).

Positions 4–173 constitute a Flavodoxin-like domain; the sequence is IGLFFGSDTG…RLKGWLSLIA (170 aa).

The protein belongs to the flavodoxin family. Requires FMN as cofactor.

Low-potential electron donor to a number of redox enzymes. NifF is the electron donor to nitrogenase. This chain is Flavodoxin (nifF), found in Rhodobacter capsulatus (strain ATCC BAA-309 / NBRC 16581 / SB1003).